Consider the following 380-residue polypeptide: Chaperone protein DnaJ (380 aa).

The region spanning 5 to 69 is the J domain; that stretch reads DYYEILGVSK…QKRAHYDQFG (65 aa). A CR-type zinc finger spans residues 135-217; sequence GKETDIEIPS…CGGTGRVKRR (83 aa). 8 residues coordinate Zn(2+): Cys148, Cys151, Cys165, Cys168, Cys191, Cys194, Cys205, and Cys208. 4 CXXCXGXG motif repeats span residues 148 to 155, 165 to 172, 191 to 198, and 205 to 212; these read CNTCHGTG, CPHCHGAG, CPYCGGTG, and CTTCGGTG.

It belongs to the DnaJ family. As to quaternary structure, homodimer. The cofactor is Zn(2+).

It localises to the cytoplasm. Participates actively in the response to hyperosmotic and heat shock by preventing the aggregation of stress-denatured proteins and by disaggregating proteins, also in an autonomous, DnaK-independent fashion. Unfolded proteins bind initially to DnaJ; upon interaction with the DnaJ-bound protein, DnaK hydrolyzes its bound ATP, resulting in the formation of a stable complex. GrpE releases ADP from DnaK; ATP binding to DnaK triggers the release of the substrate protein, thus completing the reaction cycle. Several rounds of ATP-dependent interactions between DnaJ, DnaK and GrpE are required for fully efficient folding. Also involved, together with DnaK and GrpE, in the DNA replication of plasmids through activation of initiation proteins. The polypeptide is Chaperone protein DnaJ (Geobacillus stearothermophilus (Bacillus stearothermophilus)).